The primary structure comprises 476 residues: Aspartyl/glutamyl-tRNA(Asn/Gln) amidotransferase subunit B (476 aa).

This sequence belongs to the GatB/GatE family. GatB subfamily. In terms of assembly, heterotrimer of A, B and C subunits.

It catalyses the reaction L-glutamyl-tRNA(Gln) + L-glutamine + ATP + H2O = L-glutaminyl-tRNA(Gln) + L-glutamate + ADP + phosphate + H(+). It carries out the reaction L-aspartyl-tRNA(Asn) + L-glutamine + ATP + H2O = L-asparaginyl-tRNA(Asn) + L-glutamate + ADP + phosphate + 2 H(+). Allows the formation of correctly charged Asn-tRNA(Asn) or Gln-tRNA(Gln) through the transamidation of misacylated Asp-tRNA(Asn) or Glu-tRNA(Gln) in organisms which lack either or both of asparaginyl-tRNA or glutaminyl-tRNA synthetases. The reaction takes place in the presence of glutamine and ATP through an activated phospho-Asp-tRNA(Asn) or phospho-Glu-tRNA(Gln). This chain is Aspartyl/glutamyl-tRNA(Asn/Gln) amidotransferase subunit B, found in Bacillus pumilus (strain SAFR-032).